Here is a 358-residue protein sequence, read N- to C-terminus: Type II restriction enzyme CviJI (358 aa).

It depends on Mg(2+) as a cofactor.

The enzyme catalyses Endonucleolytic cleavage of DNA to give specific double-stranded fragments with terminal 5'-phosphates.. In terms of biological role, a P subtype restriction enzyme that recognizes the double-stranded sequence 5'-RGCY-3' and cleaves after G-2. In the presence of ATP, there is a relaxation of its specificity and it can cleave 5'-RGCN-3' and 5'-YGCY-3', but not 5'-YGCR-3' (R.CviJI* activity). This Paramecium bursaria Chlorella virus IL3A (PBCV-IL3A) protein is Type II restriction enzyme CviJI.